Consider the following 377-residue polypeptide: Peroxisomal membrane protein PEX14 (377 aa).

A compositionally biased stretch (low complexity) spans 1–20; sequence MASSEQAEQPSQPSSSPGSE. Residues 1–23 are disordered; that stretch reads MASSEQAEQPSQPSSSPGSENVV. N-acetylalanine is present on Ala2. Residues 2-108 are Peroxisomal-facing; that stretch reads ASSEQAEQPS…CSPGSSRWRD (107 aa). Lys34 is modified (N6-acetyllysine). The chain crosses the membrane as a helical span at residues 109–126; sequence YGALAIIMAGIAFGFHQL. The Cytoplasmic segment spans residues 127 to 377; the sequence is YKKYLLPLIL…EGASNESERH (251 aa). The interval 230-377 is disordered; sequence PPSPSAPKIP…EGASNESERH (148 aa). Residue Ser232 is modified to Phosphoserine. 2 stretches are compositionally biased toward low complexity: residues 244-259 and 265-275; these read PVKSPSPSSPAAVNHH and SPVSNESTSSS. 2 positions are modified to phosphoserine: Ser282 and Ser335. The span at 323–342 shows a compositional bias: acidic residues; that stretch reads KEEEEEEEEEDVSHVDEEDV. A compositionally biased stretch (basic and acidic residues) spans 360-377; the sequence is QVDKLRRPEGASNESERH.

This sequence belongs to the peroxin-14 family. Interacts with PEX13; forming the PEX13-PEX14 docking complex. Interacts with PEX5 (via WxxxF/Y motifs). Interacts with PEX19. Interacts with tubulin.

The protein resides in the peroxisome membrane. In terms of biological role, component of the PEX13-PEX14 docking complex, a translocon channel that specifically mediates the import of peroxisomal cargo proteins bound to PEX5 receptor. The PEX13-PEX14 docking complex forms a large import pore which can be opened to a diameter of about 9 nm. Mechanistically, PEX5 receptor along with cargo proteins associates with the PEX14 subunit of the PEX13-PEX14 docking complex in the cytosol, leading to the insertion of the receptor into the organelle membrane with the concomitant translocation of the cargo into the peroxisome matrix. Plays a key role for peroxisome movement through a direct interaction with tubulin. In Cricetulus longicaudatus (Long-tailed dwarf hamster), this protein is Peroxisomal membrane protein PEX14.